A 261-amino-acid polypeptide reads, in one-letter code: MRVLLTNDDGFDSVGMRVLRDVVSGHFAEVWVSAPARDCSAASRALSVRTPIKTHMRGEREFVVHGTPADSAVIGICEMTSTGKRPDLVISGINYGANTGFTVPYSGTIAAAAAAFDIGVPAIAISQQYNGKRCDNNVETSWQNSRKSVMALVSRLLRDTMWHGKCVMSINVPYSDVQGVKFAGHSCDDGHIKWDGPSMERREITSGDGRCVSYVFDDMRSPNSNDNASDTQLLEQGYIVVTPIGHSMTDHAILDKYCGLQ.

A divalent metal cation is bound by residues aspartate 8, aspartate 9, serine 40, and asparagine 94.

This sequence belongs to the SurE nucleotidase family. A divalent metal cation serves as cofactor.

It localises to the cytoplasm. The catalysed reaction is a ribonucleoside 5'-phosphate + H2O = a ribonucleoside + phosphate. Its function is as follows. Nucleotidase that shows phosphatase activity on nucleoside 5'-monophosphates. The sequence is that of 5'-nucleotidase SurE from Anaplasma marginale (strain St. Maries).